Consider the following 618-residue polypeptide: MNDLQLSAELALFLTKLPSEPGIYRMLDEEGTVLYVGKAANLKKRVNSYFSKQNTGVKTRALVSQIKSIEISVTRSETEALLLESNLIKALRPKYNVLLRDDKSYPYIHLSNHPDFPRVELYRSKKKPPSGNFFGPYPGVAAVRETIVTIQKIFKIRNCRDSYFKARSRPCLQYQIKRCTAPCVHYISPENYKLSVEDAIRFLQGKCQIILDELAERMKNAVSQLNFEEAAVLRDQIKNLRLIQEQQGVVQLRGDADVIAIEVRPGFACIQCVTIREGQVLNSQSFFPTVPYAVLDEELDANSLWQQTFEAFIGFYYLDTSERIPDLIITNQSITESRSLEYILSQRRGKSCKIQVNPRGVKSRWMDFAVNNLRISVAEYVSKHSTIRSRYQALRQLLALDKNIERMECFDISHTQGEATVASCVVFDTEGPRPSEYRRFNIEGITPGDDYAAMEQAVTRRFKRLIGAQLLPDVLIIDGGKGQVSIVKRVLTSLGVEDITLLGVSKGPSRKAGWEKLILVNENREFVLPEDSKALHLLQHIRDEAHRFAITAHRKKRQKTRVESTLESIEGVGAKRRQALLQRFGGLRELAKASLEEICKVQGISEQLAKRIYEHFHP.

A GIY-YIG domain is found at 19-97 (SEPGIYRMLD…IKALRPKYNV (79 aa)). Positions 208–243 (QIILDELAERMKNAVSQLNFEEAAVLRDQIKNLRLI) constitute a UVR domain.

It belongs to the UvrC family. Interacts with UvrB in an incision complex.

It localises to the cytoplasm. In terms of biological role, the UvrABC repair system catalyzes the recognition and processing of DNA lesions. UvrC both incises the 5' and 3' sides of the lesion. The N-terminal half is responsible for the 3' incision and the C-terminal half is responsible for the 5' incision. The sequence is that of UvrABC system protein C from Legionella pneumophila (strain Lens).